Consider the following 798-residue polypeptide: Cation channel sperm-associated auxiliary subunit delta (798 aa).

Positions 1 to 20 are cleaved as a signal peptide; it reads MLMLMLVAAVTMWLRPLVTA. Residues 21–723 lie on the Extracellular side of the membrane; that stretch reads QLCRSRTVRT…AFPVQLVSAG (703 aa). 7 disulfide bridges follow: Cys23–Cys369, Cys59–Cys145, Cys144–Cys152, Cys387–Cys496, Cys510–Cys701, Cys525–Cys572, and Cys624–Cys652. The N-linked (GlcNAc...) asparagine glycan is linked to Asn123. Residues Asn230, Asn240, Asn472, Asn538, and Asn630 are each glycosylated (N-linked (GlcNAc...) asparagine). The helical transmembrane segment at 724 to 745 threads the bilayer; sequence VVILLIISSILGSVWLAYKTPK. Over 746-798 the chain is Cytoplasmic; that stretch reads LLRTARGRRIKKCATQLCRRCKTVCQFRASATARAGTEPPGRHRTPHGGRSDH.

The protein belongs to the CATSPERD family. Component of the CatSper complex or CatSpermasome composed of the core pore-forming members CATSPER1, CATSPER2, CATSPER3 and CATSPER4 as well as auxiliary members CATSPERB, CATSPERG, CATSPERD, CATSPERE, CATSPERZ, C2CD6/CATSPERT, TMEM249, TMEM262 and EFCAB9. HSPA1 may be an additional auxiliary complex member. The core complex members CATSPER1, CATSPER2, CATSPER3 and CATSPER4 form a heterotetrameric channel. The auxiliary CATSPERB, CATSPERG, CATSPERD and CATSPERE subunits form a pavilion-like structure over the pore which stabilizes the complex through interactions with CATSPER4, CATSPER3, CATSPER1 and CATSPER2 respectively. TMEM262/CATSPERH interacts with CATSPERB, further stabilizing the complex. C2CD6/CATSPERT interacts at least with CATSPERD and is required for targeting the CatSper complex in the flagellar membrane.

The protein resides in the cell projection. It localises to the cilium. Its subcellular location is the flagellum membrane. Functionally, auxiliary component of the CatSper complex, a complex involved in sperm cell hyperactivation. Sperm cell hyperactivation is needed for sperm motility which is essential late in the preparation of sperm for fertilization. Required for CATSPER1 stability before intraflagellar transport and/or incorporation of the CatSper complex channel into the flagellar membrane. This chain is Cation channel sperm-associated auxiliary subunit delta, found in Homo sapiens (Human).